A 218-amino-acid chain; its full sequence is Eukaryotic translation initiation factor 3 subunit K (218 aa).

A PCI domain is found at 44-205 (YDWGANLAVL…NIKTKNITEK (162 aa)).

It belongs to the eIF-3 subunit K family. As to quaternary structure, component of the eukaryotic translation initiation factor 3 (eIF-3) complex.

It is found in the cytoplasm. Component of the eukaryotic translation initiation factor 3 (eIF-3) complex, which is involved in protein synthesis of a specialized repertoire of mRNAs and, together with other initiation factors, stimulates binding of mRNA and methionyl-tRNAi to the 40S ribosome. The eIF-3 complex specifically targets and initiates translation of a subset of mRNAs involved in cell proliferation. This Bombyx mori (Silk moth) protein is Eukaryotic translation initiation factor 3 subunit K.